The primary structure comprises 61 residues: Small ribosomal subunit protein uS14B (61 aa).

Residues cysteine 24, cysteine 27, cysteine 40, and cysteine 43 each contribute to the Zn(2+) site.

The protein belongs to the universal ribosomal protein uS14 family. Zinc-binding uS14 subfamily. As to quaternary structure, part of the 30S ribosomal subunit. Contacts proteins S3 and S10. Zn(2+) is required as a cofactor.

Functionally, binds 16S rRNA, required for the assembly of 30S particles and may also be responsible for determining the conformation of the 16S rRNA at the A site. This chain is Small ribosomal subunit protein uS14B, found in Levilactobacillus brevis (strain ATCC 367 / BCRC 12310 / CIP 105137 / JCM 1170 / LMG 11437 / NCIMB 947 / NCTC 947) (Lactobacillus brevis).